A 613-amino-acid polypeptide reads, in one-letter code: TANK-binding kinase 1-binding protein 1 (613 aa).

The interval 1–280 (MESMFEDDIS…QDLASNQSEC (280 aa)) is homodimerization. A coiled-coil region spans residues 48–162 (YGDIKERLGG…ALVETHLRQI (115 aa)). Ser184 is subject to Phosphoserine. Positions 218–277 (TSVSVSELERRRLEEALEAAQGEARGAQLREEQLQAECERLQGELKQLQETRAQDLASNQ) form a coiled coil. The tract at residues 281–330 (GMAWVKRVGDDQVNLALAYTELTEELGRLRELSSLQGRILRTLLQEQARN) is interaction with TBK1 and IKBKE. The segment at 328-457 (ARNAGQRHSP…HHAKAGFQGR (130 aa)) is disordered. Positions 346–361 (PACPSPSPPARPPPCA) are enriched in pro residues. Residues 362–372 (PCQSPAAQRRS) show a composition bias toward low complexity. Phosphoserine occurs at positions 365, 372, 379, 385, 400, and 415. Residues 389-406 (PSCPSPVPQRRSPVPPSC) are compositionally biased toward pro residues. Over residues 416–433 (PVPPSCPAPQPRPPPPPG) the composition is skewed to pro residues. A phosphoserine mark is found at Ser502 and Ser532. A UBZ1-type zinc finger spans residues 581–607 (IRSCPLCQLGFPVGYPDDALIKHIDSH). Residues Cys584, Cys587, His603, and His607 each contribute to the Zn(2+) site.

Homodimer. May form a heterodimer with NAP1. Interacts with TKB1 and IKBKE. Weakly interacts with DDX3X.

Its function is as follows. Adapter protein which constitutively binds TBK1 and IKBKE playing a role in antiviral innate immunity. Essential for the efficient induction of IRF-dependent transcription following infection with Sendai virus. The protein is TANK-binding kinase 1-binding protein 1 of Rattus norvegicus (Rat).